Here is a 374-residue protein sequence, read N- to C-terminus: MSKRDYYDVLGVAKDADKKDIKKAYRSLANKYHPDKNPDNPEALDKFKELAEAYEILSSDDKRAAYDRFGHDGVNGQAGGYGGAGAGGFSDIFGDVFGDIFGGGGGGQSRTRRGSDLRYTLELDLEQAVWGCEEKIRIPTLVNCKTCDGSGAKKGSTPKTCGTCGGAGQVRMSQGFFSVQQTCPECHGAGQVISDPCRDCHGQGRVQEYKTLNVKIPAGVDTGDRIRLSGEGEAGTHGGPAGDLFVQVSVKPHSIFERDGANLYCEVPISFTTAALGGEIDVPTLDGRVRLKVTAECQSGKLFRLRNKGVKPVRGGPVGDLICKVVVETPVNLTSRQKELFTELAESMGEGTDHSPKQKSWFDGVKRFFDDIKK.

The J domain maps to 5-70 (DYYDVLGVAK…DKRAAYDRFG (66 aa)). A CR-type zinc finger spans residues 131 to 209 (GCEEKIRIPT…CHGQGRVQEY (79 aa)). Residues cysteine 144, cysteine 147, cysteine 161, cysteine 164, cysteine 183, cysteine 186, cysteine 197, and cysteine 200 each contribute to the Zn(2+) site. CXXCXGXG motif repeat units follow at residues 144–151 (CKTCDGSG), 161–168 (CGTCGGAG), 183–190 (CPECHGAG), and 197–204 (CRDCHGQG).

It belongs to the DnaJ family. As to quaternary structure, homodimer. Zn(2+) serves as cofactor.

Its subcellular location is the cytoplasm. In terms of biological role, participates actively in the response to hyperosmotic and heat shock by preventing the aggregation of stress-denatured proteins and by disaggregating proteins, also in an autonomous, DnaK-independent fashion. Unfolded proteins bind initially to DnaJ; upon interaction with the DnaJ-bound protein, DnaK hydrolyzes its bound ATP, resulting in the formation of a stable complex. GrpE releases ADP from DnaK; ATP binding to DnaK triggers the release of the substrate protein, thus completing the reaction cycle. Several rounds of ATP-dependent interactions between DnaJ, DnaK and GrpE are required for fully efficient folding. Also involved, together with DnaK and GrpE, in the DNA replication of plasmids through activation of initiation proteins. The chain is Chaperone protein DnaJ from Marinomonas sp. (strain MWYL1).